The sequence spans 349 residues: MAEVSFGIELLPDDKPTKIAHLIKVAEDNGFEYAWICDHYNNYSYMGVLTLAAVITSKIKLGPGITNPYTRHPLITASNIATLDWISGGRAIIGMGPGDKATFDKMGLPFPCKIPIWNPEAEDEVGPATAIREVKEVIYQYLEGGPVEYEGKYVKTGTADVNARSIQGSDIPFYMGAQGPIMLKTAGEIADGVLVNASNPKDFEVAVPKIEEGAKEAGRSLDEIDVAAYTCFSIDKDEDKAIEATKIVVAFIVMGSPDVVLERHGIDTEKAEQIAEAIGKGDFGTAIGLVDEDMIEAFSIAGDPDTVVDKIEELLKAGVTQVVVGSPIGPDKEKAIELVGQEVIPHFKE.

It belongs to the mer family. As to quaternary structure, homotetramer composed of two loosely associated dimers.

The protein resides in the cytoplasm. The enzyme catalyses 5-methyl-5,6,7,8-tetrahydromethanopterin + oxidized coenzyme F420-(gamma-L-Glu)(n) + H(+) = 5,10-methylenetetrahydromethanopterin + reduced coenzyme F420-(gamma-L-Glu)(n). It functions in the pathway one-carbon metabolism; methanogenesis from CO(2); methyl-coenzyme M from 5,10-methylene-5,6,7,8-tetrahydromethanopterin: step 1/2. Requires the presence of relatively high concentrations of either sulfate or phosphate for maximal activity. Its function is as follows. Catalyzes the reversible reduction of methylene-H(4)MPT to methyl-H(4)MPT. This is 5,10-methylenetetrahydromethanopterin reductase from Methanopyrus kandleri (strain AV19 / DSM 6324 / JCM 9639 / NBRC 100938).